We begin with the raw amino-acid sequence, 356 residues long: Phosphoribosyl pyrophosphate synthase-associated protein 1 (356 aa).

Residue M1 is modified to N-acetylmethionine. S177 and S215 each carry phosphoserine.

The protein belongs to the ribose-phosphate pyrophosphokinase family. As to quaternary structure, binds to PRPS1 and PRPS2.

Seems to play a negative regulatory role in 5-phosphoribose 1-diphosphate synthesis. The sequence is that of Phosphoribosyl pyrophosphate synthase-associated protein 1 (Prpsap1) from Mus musculus (Mouse).